Consider the following 775-residue polypeptide: E3 ubiquitin-protein ligase ICP0 (775 aa).

Residues 1 to 112 are disordered; the sequence is MEPRPGASTR…PPREDGGSDE (112 aa). Composition is skewed to basic and acidic residues over residues 10-21 and 45-57; these read RRPEGRPQREPA and VGGRGDADHHDDD. A compositionally biased stretch (acidic residues) spans 58 to 69; sequence SASEADSTDTEL. Position 67 is a phosphothreonine; by host; by CK1 (threonine 67). Residues 116–157 form an RING-type zinc finger; sequence CAVCTDEIAPHLRCDTFPCMHRFCIPCMKTWMQLRNTCPLCN. Residues 221–636 form a disordered region; it reads RALSPTHPEP…HAETSGAVPA (416 aa). A compositionally biased stretch (acidic residues) spans 231–243; sequence TTDEDDDDLDDAD. Residues 258–284 show a composition bias toward low complexity; it reads RRGAAAPPVTGGASHAAPQPAAARTAP. Residues 293 to 302 show a composition bias toward polar residues; it reads GSSNTNTTTN. Residues 310–321 are compositionally biased toward low complexity; sequence RQSRAAAPRGAS. Gly residues predominate over residues 322-331; that stretch reads GPSGGVGVGV. A compositionally biased stretch (pro residues) spans 369-390; that stretch reads PASPHRPPAAPMPGSAPRPGPP. Residues 391–409 show a composition bias toward low complexity; the sequence is ASAAASGPARPRAAVAPCV. Pro residues predominate over residues 410 to 421; that stretch reads RAPPPGPGPRAP. Residues 422 to 431 are compositionally biased toward low complexity; the sequence is APGAEPAARP. Over residues 439–453 the composition is skewed to polar residues; sequence QSHSSLAQAANQEQS. A compositionally biased stretch (gly residues) spans 464-476; it reads GSGGPGVEGGHGP. The segment covering 477–493 has biased composition (low complexity); that stretch reads SRGAAPSGAAPLPSAAS. Residues 509–519 show a composition bias toward polar residues; sequence GQENPSPQSTR. Residues 539–549 are compositionally biased toward gly residues; sequence GPGGRGQGGPG. Residues 550-592 show a composition bias toward low complexity; sequence TPLTSSAASASSSSASSSSAPTPAGAASSAAGAASSSASASSG. The span at 617 to 626 shows a compositional bias: basic residues; sequence GPRKCARKTR.

This sequence belongs to the simplexviruses ICp0 family. In terms of assembly, interacts directly with human RCOR1/CoREST protein, leading to the disruption of the human BHC corepressor complex. Interacts with human CENPA, leading to its degradation. Interacts with human USP7; this interaction modulates ICP0 stability. Interacts with human CDC34. Interacts (when phosphorylated) with human RNF8 (via FHA domain). Interacts with human TRIM27. Interacts with human ZBP1. Interacts with host MORC3; this interaction promotes the degradation of host MORC3. Post-translationally, phosphorylated at Thr-67, leading to promote interaction with host RNF8. Phosphorylated by host CHEK2; leading to increased SUMO-targeted ubiquitin ligase activity of ICP0. In terms of processing, auto-ubiquitinated. Deubiquitinated by host USP7; leading to stabilize it.

Its subcellular location is the host cytoplasm. It localises to the host nucleus. It catalyses the reaction S-ubiquitinyl-[E2 ubiquitin-conjugating enzyme]-L-cysteine + [acceptor protein]-L-lysine = [E2 ubiquitin-conjugating enzyme]-L-cysteine + N(6)-ubiquitinyl-[acceptor protein]-L-lysine.. SUMO-targeted ubiquitin ligase that plays an essential role in nuclear antiviral defense evasion triggered by dsDNA viruses. Acts during the initial stages of lytic infection and the reactivation of latent viral genome. Prevents the antiviral effect of nuclear bodies by degrading host PML, SP100 and MORC3. Prevents antiviral response to viral DNA induced by IFI16 by degrading it. Additionally, inhibits host IRF3 nuclear signaling to prevent interferon production by the infected cells. Interestingly, the E3 ubiquitin ligase activity associated with the RING finger domain does not seem to be directly required to inhibit the activation of IRF3 but instead plays a critical role in modulating the cellular localization of ICP0. Upon reactivation of latent genome, suppresses the silencing of viral DNA by dissociating either HDAC1 or HDAC2 from the HDAC-RCOR1-REST-KDM1A complex localized at the ND10 structures and causes their dispersal. Two cellular histone ubiquitin ligases RNF8 and RNF168 are also targeted by ICP0 for degradation, leading to a loss of ubiquitinated forms of H2A, a relief of transcriptional repression, and the activation of latent viral genomes. Enhances the localization of host CCND3 to ND10 bodies that serve as precursors of replication compartments to enable efficient viral replication. Like many RING-finger E3 ubiquitin ligases, ICP0 can induce its own ubiquitination, an activity that promotes its instability due to its targeting to the 26S proteasome for degradation. ICP0 restricts this process by recruiting the cellular ubiquitin-specific protease USP7 that cleaves the anchored ubiquitin chains from ICP0, thereby promoting its stabilization. This is E3 ubiquitin-protein ligase ICP0 (ICP0) from Homo sapiens (Human).